We begin with the raw amino-acid sequence, 146 residues long: MKLHELKPAEGSRKVRNRVGRGIGSGNGKTAGKGHKGQNARSGGGVRLGFEGGQTPLFRRLPKRGFTNINRKEFAIVNLSTLNRFEDGTEVTPELLLETGVISKLNDGVKVLASGAVEKKLTVKAHKFSSSAKEAIEAAGGSVEVI.

The span at 1-13 shows a compositional bias: basic and acidic residues; sequence MKLHELKPAEGSR. The segment at 1–52 is disordered; that stretch reads MKLHELKPAEGSRKVRNRVGRGIGSGNGKTAGKGHKGQNARSGGGVRLGFEG. 2 stretches are compositionally biased toward gly residues: residues 21–31 and 42–52; these read RGIGSGNGKTA and SGGGVRLGFEG.

It belongs to the universal ribosomal protein uL15 family. As to quaternary structure, part of the 50S ribosomal subunit.

Functionally, binds to the 23S rRNA. This is Large ribosomal subunit protein uL15 from Bacillus cereus (strain B4264).